A 98-amino-acid chain; its full sequence is NADH-ubiquinone oxidoreductase chain 4L (98 aa).

3 helical membrane-spanning segments follow: residues 1–21 (MPVV…GLLI), 29–49 (SLLC…VTVL), and 61–81 (IILL…LVMV).

It belongs to the complex I subunit 4L family. Core subunit of respiratory chain NADH dehydrogenase (Complex I) which is composed of 45 different subunits.

It localises to the mitochondrion inner membrane. It catalyses the reaction a ubiquinone + NADH + 5 H(+)(in) = a ubiquinol + NAD(+) + 4 H(+)(out). In terms of biological role, core subunit of the mitochondrial membrane respiratory chain NADH dehydrogenase (Complex I) which catalyzes electron transfer from NADH through the respiratory chain, using ubiquinone as an electron acceptor. Part of the enzyme membrane arm which is embedded in the lipid bilayer and involved in proton translocation. The sequence is that of NADH-ubiquinone oxidoreductase chain 4L (MT-ND4L) from Ursus americanus (American black bear).